The following is a 473-amino-acid chain: Photosystem II CP43 reaction center protein (473 aa).

Residues 1–14 constitute a propeptide that is removed on maturation; the sequence is MKILYSLRRFYHVE. Thr15 is modified (N-acetylthreonine). At Thr15 the chain carries Phosphothreonine. A run of 5 helical transmembrane segments spans residues 69–93, 134–155, 178–200, 255–275, and 291–312; these read LFEVAHFVPEKPMYEQGLILLPHLA, LLGPETLEESFPFFGYVWKDRN, KALYFGGVYDTWAPGGGDVRKIT, KPFAWARRAFVWSGEAYLSYS, and WFNNTAYPSEFYGPTGPEASQA. Glu367 lines the [CaMn4O5] cluster pocket. A helical transmembrane segment spans residues 447–471; the sequence is RARAAAAGFEKGIDRDLEPVLYMNP.

The protein belongs to the PsbB/PsbC family. PsbC subfamily. PSII is composed of 1 copy each of membrane proteins PsbA, PsbB, PsbC, PsbD, PsbE, PsbF, PsbH, PsbI, PsbJ, PsbK, PsbL, PsbM, PsbT, PsbX, PsbY, PsbZ, Psb30/Ycf12, at least 3 peripheral proteins of the oxygen-evolving complex and a large number of cofactors. It forms dimeric complexes. Requires Binds multiple chlorophylls and provides some of the ligands for the Ca-4Mn-5O cluster of the oxygen-evolving complex. It may also provide a ligand for a Cl- that is required for oxygen evolution. PSII binds additional chlorophylls, carotenoids and specific lipids. as cofactor.

The protein resides in the plastid. The protein localises to the chloroplast thylakoid membrane. In terms of biological role, one of the components of the core complex of photosystem II (PSII). It binds chlorophyll and helps catalyze the primary light-induced photochemical processes of PSII. PSII is a light-driven water:plastoquinone oxidoreductase, using light energy to abstract electrons from H(2)O, generating O(2) and a proton gradient subsequently used for ATP formation. In Brachypodium distachyon (Purple false brome), this protein is Photosystem II CP43 reaction center protein.